Reading from the N-terminus, the 390-residue chain is Succinate--CoA ligase [ADP-forming] subunit beta (390 aa).

In terms of domain architecture, ATP-grasp spans 9 to 245; that stretch reads KHLLKKYNIP…TTQEDEHETM (237 aa). ATP-binding positions include Lys46, 53–55, Glu99, Ser102, and Glu107; that span reads GRG. The Mg(2+) site is built by Asn200 and Asp214. Substrate is bound by residues Asn265 and 322–324; that span reads GIV.

The protein belongs to the succinate/malate CoA ligase beta subunit family. Heterotetramer of two alpha and two beta subunits. Mg(2+) is required as a cofactor.

The enzyme catalyses succinate + ATP + CoA = succinyl-CoA + ADP + phosphate. The catalysed reaction is GTP + succinate + CoA = succinyl-CoA + GDP + phosphate. Its pathway is carbohydrate metabolism; tricarboxylic acid cycle; succinate from succinyl-CoA (ligase route): step 1/1. Functionally, succinyl-CoA synthetase functions in the citric acid cycle (TCA), coupling the hydrolysis of succinyl-CoA to the synthesis of either ATP or GTP and thus represents the only step of substrate-level phosphorylation in the TCA. The beta subunit provides nucleotide specificity of the enzyme and binds the substrate succinate, while the binding sites for coenzyme A and phosphate are found in the alpha subunit. This Coxiella burnetii (strain CbuK_Q154) (Coxiella burnetii (strain Q154)) protein is Succinate--CoA ligase [ADP-forming] subunit beta.